A 282-amino-acid chain; its full sequence is MTGESGAAAAPSITLNDEHTMPVLGLGVAELSDDETERAVSAALEIGCRLIDTAYAYGNEAAVGRAIAASGVAREELFVTTKLATPDQGFTRSQEACRASLDRLGLDYVDLYLIHWPAPPVGKYVDAWGGMIQSRGEGHARSIGVSNFTAEHIENLIDLTFVTPAVNQIELHPLLNQDELRKANAQHTVVTQSYCPLALGRLLDNPTVTSIASEYVKTPAQVLLRWNLQLGNAVVVRSARPERIASNFDVFDFELAAEHMDALGGLNDGTRVREDPLTYAGT.

Residue Tyr-57 is the Proton donor of the active site. Residues Leu-197, Val-235, Arg-237, Ser-238, Ala-239, Arg-243, Ser-246, Asn-247, and Arg-273 each coordinate NADPH.

This sequence belongs to the aldo/keto reductase family.

In Mycobacterium bovis (strain ATCC BAA-935 / AF2122/97), this protein is Aldo-keto reductase BQ2027_MB2996.